Consider the following 104-residue polypeptide: Co-chaperonin GroES 2 (104 aa).

Belongs to the GroES chaperonin family. Heptamer of 7 subunits arranged in a ring. Interacts with the chaperonin GroEL.

Its subcellular location is the cytoplasm. Its function is as follows. Together with the chaperonin GroEL, plays an essential role in assisting protein folding. The GroEL-GroES system forms a nano-cage that allows encapsulation of the non-native substrate proteins and provides a physical environment optimized to promote and accelerate protein folding. GroES binds to the apical surface of the GroEL ring, thereby capping the opening of the GroEL channel. The chain is Co-chaperonin GroES 2 from Bradyrhizobium diazoefficiens (strain JCM 10833 / BCRC 13528 / IAM 13628 / NBRC 14792 / USDA 110).